Consider the following 46-residue polypeptide: Small, acid-soluble spore protein N (46 aa).

The disordered stretch occupies residues 1–46 (MAKMKHGSAQFRPDHLGTQPRKSDANKGKKMNTKGNENPQYIPPKG).

This sequence belongs to the SspN family.

The protein localises to the spore core. In Halalkalibacterium halodurans (strain ATCC BAA-125 / DSM 18197 / FERM 7344 / JCM 9153 / C-125) (Bacillus halodurans), this protein is Small, acid-soluble spore protein N.